The following is a 364-amino-acid chain: Growth hormone secretagogue receptor type 1 (364 aa).

Over 1–40 the chain is Extracellular; that stretch reads MWNATPSEEPEPNVTLDLDWDASPGNDSLPDELLPLFPAP. Residues Asn13 and Asn26 are each glycosylated (N-linked (GlcNAc...) asparagine). Residues 41–66 form a helical membrane-spanning segment; it reads LLAGVTATCVALFVVGISGNLLTMLV. Residues 67-72 are Cytoplasmic-facing; that stretch reads VSRFRE. Residues 73–96 form a helical membrane-spanning segment; that stretch reads LRTTTNLYLSSMAFSDLLIFLCMP. Residues 97–117 are Extracellular-facing; it reads LDLVRLWQYRPWNFGDLLCKL. Residues Cys115 and Cys197 are joined by a disulfide bond. The helical transmembrane segment at 118 to 139 threads the bilayer; the sequence is FQFVSESCTYATVLTITALSVE. Residues 140–162 are Cytoplasmic-facing; the sequence is RYFAICFPLRAKVVVTKGRVKLV. A helical transmembrane segment spans residues 163-183; sequence ILVIWAVAFCSAGPIFVLVGV. The Extracellular segment spans residues 184-211; the sequence is EHENGTDPRDTNECRATEFAVRSGLLTV. Residue Asn187 is glycosylated (N-linked (GlcNAc...) asparagine). A helical transmembrane segment spans residues 212–235; the sequence is MVWVSSVFFFLPVFCLTVLYSLIG. Residues 236–263 are Cytoplasmic-facing; it reads RKLWRRRGDAAVGASLRDQNHKQTVKML. A helical membrane pass occupies residues 264 to 285; sequence AVVVFAFILCWLPFHVGRYLFS. Residues 286-302 lie on the Extracellular side of the membrane; it reads KSFEPGSLEIAQISQYC. The chain crosses the membrane as a helical span at residues 303–326; sequence NLVSFVLFYLSAAINPILYNIMSK. At 327–364 the chain is on the cytoplasmic side; it reads KYRVAVFKLLGFESFSQRKLSTLKDESSRAWTKSSINT.

It belongs to the G-protein coupled receptor 1 family.

The protein resides in the cell membrane. In terms of biological role, receptor for ghrelin, coupled to G-alpha-11 proteins. Stimulates growth hormone secretion. Also binds other growth hormone releasing peptides (GHRP) (e.g. Met-enkephalin and GHRP-6) as well as non-peptide, low molecular weight secretagogues (e.g. L-692,429, MK-0677, adenosine). The polypeptide is Growth hormone secretagogue receptor type 1 (Ghsr) (Rattus norvegicus (Rat)).